The primary structure comprises 313 residues: MENRSLVTIAEHSKEKILYLLEMAKEFEKKPNRKILDGKVVATLFFEPSTRTRLSFETAANRLGARVIGFTDPKVTSSSKGETLKDTIMMVSNYADIIVMRHFLEGAARYASEVAPVPIVNAGDGANQHPSQTMLDLYSIYKTQGTLENLNIYLVGDLKYGRTVHSLLMAMRHFNPTFHFIAPEELKMPEEYKIYCKEHHIKYKEYTDFNEETIADADILYMTRVQRERFTDLMEYERVKDVYILRNKMLEHTRPNLRILHPLPRVNEIAYDVDENPKAYYFQQAQNGLYARQAILCDVLGITLNDVIEDAKK.

Residues Arg-51 and Thr-52 each contribute to the carbamoyl phosphate site. Position 80 (Lys-80) interacts with L-aspartate. 3 residues coordinate carbamoyl phosphate: Arg-101, His-129, and Gln-132. Arg-162 and Arg-224 together coordinate L-aspartate. Leu-263 and Pro-264 together coordinate carbamoyl phosphate.

It belongs to the aspartate/ornithine carbamoyltransferase superfamily. ATCase family. In terms of assembly, heterododecamer (2C3:3R2) of six catalytic PyrB chains organized as two trimers (C3), and six regulatory PyrI chains organized as three dimers (R2).

The enzyme catalyses carbamoyl phosphate + L-aspartate = N-carbamoyl-L-aspartate + phosphate + H(+). It participates in pyrimidine metabolism; UMP biosynthesis via de novo pathway; (S)-dihydroorotate from bicarbonate: step 2/3. Catalyzes the condensation of carbamoyl phosphate and aspartate to form carbamoyl aspartate and inorganic phosphate, the committed step in the de novo pyrimidine nucleotide biosynthesis pathway. The polypeptide is Aspartate carbamoyltransferase catalytic subunit (Phocaeicola vulgatus (strain ATCC 8482 / DSM 1447 / JCM 5826 / CCUG 4940 / NBRC 14291 / NCTC 11154) (Bacteroides vulgatus)).